The chain runs to 456 residues: ATP synthase subunit beta 1 (456 aa).

Residue 152 to 159 coordinates ATP; sequence GGAGVGKS.

This sequence belongs to the ATPase alpha/beta chains family. In terms of assembly, F-type ATPases have 2 components, CF(1) - the catalytic core - and CF(0) - the membrane proton channel. CF(1) has five subunits: alpha(3), beta(3), gamma(1), delta(1), epsilon(1). CF(0) has three main subunits: a(1), b(2) and c(9-12). The alpha and beta chains form an alternating ring which encloses part of the gamma chain. CF(1) is attached to CF(0) by a central stalk formed by the gamma and epsilon chains, while a peripheral stalk is formed by the delta and b chains.

It is found in the cell membrane. It carries out the reaction ATP + H2O + 4 H(+)(in) = ADP + phosphate + 5 H(+)(out). In terms of biological role, produces ATP from ADP in the presence of a proton gradient across the membrane. The catalytic sites are hosted primarily by the beta subunits. The protein is ATP synthase subunit beta 1 of Listeria innocua serovar 6a (strain ATCC BAA-680 / CLIP 11262).